Reading from the N-terminus, the 132-residue chain is Small ribosomal subunit protein uS8 (132 aa).

Belongs to the universal ribosomal protein uS8 family. As to quaternary structure, part of the 30S ribosomal subunit. Contacts proteins S5 and S12.

One of the primary rRNA binding proteins, it binds directly to 16S rRNA central domain where it helps coordinate assembly of the platform of the 30S subunit. The sequence is that of Small ribosomal subunit protein uS8 from Xanthomonas euvesicatoria pv. vesicatoria (strain 85-10) (Xanthomonas campestris pv. vesicatoria).